The sequence spans 63 residues: MAVPKRKTSRMKRGFRRSADAIKAPTYIEDKDSGELRRPHHVDLKTGMYRGRQIFTPKVREEA.

The span at 1–16 (MAVPKRKTSRMKRGFR) shows a compositional bias: basic residues. The interval 1-22 (MAVPKRKTSRMKRGFRRSADAI) is disordered.

Belongs to the bacterial ribosomal protein bL32 family.

This chain is Large ribosomal subunit protein bL32, found in Beijerinckia indica subsp. indica (strain ATCC 9039 / DSM 1715 / NCIMB 8712).